We begin with the raw amino-acid sequence, 24 residues long: Ranatuerin-4 (24 aa).

A disulfide bridge connects residues cysteine 18 and cysteine 24.

The protein belongs to the frog skin active peptide (FSAP) family. Ranatuerin subfamily. In terms of tissue distribution, expressed by the skin glands.

It is found in the secreted. Functionally, antibacterial activity against Gram-positive bacterium S.aureus (MIC=55 uM). Shows no detectable hemolytic activity towards human erythrocytes. This is Ranatuerin-4 from Aquarana catesbeiana (American bullfrog).